A 292-amino-acid chain; its full sequence is Bifunctional protein FolD (292 aa).

Residues 169–171, Thr-196, and Val-237 contribute to the NADP(+) site; that span reads GRG.

Belongs to the tetrahydrofolate dehydrogenase/cyclohydrolase family. In terms of assembly, homodimer.

The enzyme catalyses (6R)-5,10-methylene-5,6,7,8-tetrahydrofolate + NADP(+) = (6R)-5,10-methenyltetrahydrofolate + NADPH. It catalyses the reaction (6R)-5,10-methenyltetrahydrofolate + H2O = (6R)-10-formyltetrahydrofolate + H(+). It participates in one-carbon metabolism; tetrahydrofolate interconversion. In terms of biological role, catalyzes the oxidation of 5,10-methylenetetrahydrofolate to 5,10-methenyltetrahydrofolate and then the hydrolysis of 5,10-methenyltetrahydrofolate to 10-formyltetrahydrofolate. This Bifidobacterium longum (strain NCC 2705) protein is Bifunctional protein FolD.